Consider the following 192-residue polypeptide: A-type ATP synthase subunit E (192 aa).

The protein belongs to the V-ATPase E subunit family. Has multiple subunits with at least A(3), B(3), C, D, E, F, H, I and proteolipid K(x).

It localises to the cell membrane. Component of the A-type ATP synthase that produces ATP from ADP in the presence of a proton gradient across the membrane. This is A-type ATP synthase subunit E from Halorubrum lacusprofundi (strain ATCC 49239 / DSM 5036 / JCM 8891 / ACAM 34).